Consider the following 187-residue polypeptide: Putative lipoprotein LppJ (187 aa).

An N-terminal signal peptide occupies residues 1-28 (MPHSTADRRLRLTRQALLAAAVVPLLAG). Cysteine 29 is lipidated: N-palmitoyl cysteine. Cysteine 29 carries the S-diacylglycerol cysteine lipid modification.

The protein resides in the cell membrane. The polypeptide is Putative lipoprotein LppJ (lppJ) (Mycobacterium tuberculosis (strain CDC 1551 / Oshkosh)).